The following is a 408-amino-acid chain: DNA primase DnaG (408 aa).

The region spanning 166-241 (EEIIIVEGRA…KIDYIARAPP (76 aa)) is the Toprim domain. Residues Glu-172, Asp-215, and Asp-217 each coordinate Mg(2+).

Belongs to the archaeal DnaG primase family. As to quaternary structure, forms a ternary complex with MCM helicase and DNA. Component of the archaeal exosome complex. Mg(2+) is required as a cofactor.

The enzyme catalyses ssDNA + n NTP = ssDNA/pppN(pN)n-1 hybrid + (n-1) diphosphate.. Functionally, RNA polymerase that catalyzes the synthesis of short RNA molecules used as primers for DNA polymerase during DNA replication. Also part of the exosome, which is a complex involved in RNA degradation. Acts as a poly(A)-binding protein that enhances the interaction between heteromeric, adenine-rich transcripts and the exosome. In Desulfurococcus amylolyticus (strain DSM 18924 / JCM 16383 / VKM B-2413 / 1221n) (Desulfurococcus kamchatkensis), this protein is DNA primase DnaG.